The primary structure comprises 266 residues: Serine/arginine-rich splicing factor 12 (266 aa).

Residues 42 to 266 (ARPRRPRAPR…SRSYHHKNSW (225 aa)) form a disordered region. Basic residues predominate over residues 43–62 (RPRRPRAPRPRLRLRGRPGR). Residues 102–114 (KSKERHLCSPSDH) are compositionally biased toward basic and acidic residues. Over residues 115–127 (RRSRSPSQRRSRS) the composition is skewed to basic residues. Residues 133–144 (GRDRRHSDSLKE) show a composition bias toward basic and acidic residues. Residues 151–166 (SYSQSKSRSKSLPRQS) are compositionally biased toward low complexity. Residues 183–194 (GRSRSKSLPKRS) are compositionally biased toward basic residues. 2 stretches are compositionally biased toward polar residues: residues 202–212 (SRSPQKQTGSG) and 235–244 (AYTSSGSKTQ). The span at 245–266 (TTKHSHLRSHSRSRSYHHKNSW) shows a compositional bias: basic residues.

This sequence belongs to the splicing factor SR family.

Its subcellular location is the nucleus. In terms of biological role, splicing factor that seems to antagonize SR proteins in pre-mRNA splicing regulation. The sequence is that of Serine/arginine-rich splicing factor 12 (Srsf12) from Mus musculus (Mouse).